Here is a 214-residue protein sequence, read N- to C-terminus: Avenin (214 aa).

Positions 1-28 (MKIFFFLALLALVVSATFAQYAESDGSY) are cleaved as a signal peptide. Positions 180 to 214 (RGQESGVFTPKFTQTSFQPYPEGEDESSLINKASE) are disordered.

Its function is as follows. Seed storage protein. The chain is Avenin from Avena sativa (Oat).